The primary structure comprises 64 residues: Alternative prion protein (64 aa).

Positions 1-22 (MEHWGEPIPGTGQSWRQPLSTS) are disordered. Positions 11 to 22 (TGQSWRQPLSTS) are enriched in polar residues. A helical transmembrane segment spans residues 40–58 (WRWLGSAPWWWLGTATWWW).

Its subcellular location is the mitochondrion outer membrane. In Ovis aries (Sheep), this protein is Alternative prion protein.